Consider the following 472-residue polypeptide: Cysteine--tRNA ligase (472 aa).

Residue cysteine 28 participates in Zn(2+) binding. A 'HIGH' region motif is present at residues 30 to 40 (PTVYDYTHIGH). The Zn(2+) site is built by cysteine 207, histidine 232, and glutamate 236. A 'KMSKS' region motif is present at residues 264–268 (KMSKS). Lysine 267 contributes to the ATP binding site.

Belongs to the class-I aminoacyl-tRNA synthetase family. Zn(2+) is required as a cofactor.

It is found in the cytoplasm. The enzyme catalyses tRNA(Cys) + L-cysteine + ATP = L-cysteinyl-tRNA(Cys) + AMP + diphosphate. The protein is Cysteine--tRNA ligase (cysS) of Aeropyrum pernix (strain ATCC 700893 / DSM 11879 / JCM 9820 / NBRC 100138 / K1).